The chain runs to 302 residues: Glutamyl-Q tRNA(Asp) synthetase (302 aa).

L-glutamate is bound by residues 13-17 and Asp-49; that span reads RFAPS. The 'HIGH' region motif lies at 16–26; that stretch reads PSPTGPLHLGS. The Zn(2+) site is built by Cys-105, Cys-107, Tyr-119, and Cys-123. Positions 178 and 196 each coordinate L-glutamate. A 'KMSKS' region motif is present at residues 234 to 238; sequence KLSKQ. Lys-237 is a binding site for ATP.

It belongs to the class-I aminoacyl-tRNA synthetase family. GluQ subfamily. The cofactor is Zn(2+).

Functionally, catalyzes the tRNA-independent activation of glutamate in presence of ATP and the subsequent transfer of glutamate onto a tRNA(Asp). Glutamate is transferred on the 2-amino-5-(4,5-dihydroxy-2-cyclopenten-1-yl) moiety of the queuosine in the wobble position of the QUC anticodon. This Methylococcus capsulatus (strain ATCC 33009 / NCIMB 11132 / Bath) protein is Glutamyl-Q tRNA(Asp) synthetase.